The primary structure comprises 334 residues: Phosphate acyltransferase (334 aa).

Belongs to the PlsX family. Homodimer. Probably interacts with PlsY.

It localises to the cytoplasm. It catalyses the reaction a fatty acyl-[ACP] + phosphate = an acyl phosphate + holo-[ACP]. The protein operates within lipid metabolism; phospholipid metabolism. Catalyzes the reversible formation of acyl-phosphate (acyl-PO(4)) from acyl-[acyl-carrier-protein] (acyl-ACP). This enzyme utilizes acyl-ACP as fatty acyl donor, but not acyl-CoA. This chain is Phosphate acyltransferase, found in Streptococcus thermophilus (strain CNRZ 1066).